Here is a 386-residue protein sequence, read N- to C-terminus: Eukaryotic translation initiation factor 3 subunit M (386 aa).

The 163-residue stretch at 181 to 343 folds into the PCI domain; it reads NSELASKVMI…RKVHISSTMH (163 aa).

It belongs to the eIF-3 subunit M family. Component of the eukaryotic translation initiation factor 3 (eIF-3) complex.

It localises to the cytoplasm. Its function is as follows. Component of the eukaryotic translation initiation factor 3 (eIF-3) complex, which is involved in protein synthesis of a specialized repertoire of mRNAs and, together with other initiation factors, stimulates binding of mRNA and methionyl-tRNAi to the 40S ribosome. The eIF-3 complex specifically targets and initiates translation of a subset of mRNAs involved in cell proliferation. This is Eukaryotic translation initiation factor 3 subunit M from Culex quinquefasciatus (Southern house mosquito).